We begin with the raw amino-acid sequence, 191 residues long: Prostaglandin-H2 D-isomerase (191 aa).

The signal sequence occupies residues 1-24 (MGALCTLWLGLVLLGVLGALQTSA). Glutamine 25 bears the Pyrrolidone carboxylic acid mark. Asparagine 51 carries N-linked (GlcNAc...) asparagine glycosylation. Cysteine 65 serves as the catalytic Nucleophile. N-linked (GlcNAc...) asparagine glycosylation is present at asparagine 78. Cysteine 89 and cysteine 186 are oxidised to a cystine.

Belongs to the calycin superfamily. Lipocalin family. In terms of assembly, monomer. Post-translationally, N- and O-glycosylated. Both N-glycosylation recognition sites are almost quantitatively occupied by N-glycans of the biantennary complex type, with a considerable proportion of structures bearing a bisecting GlcNAc. N-glycan at Asn-78: dHex1Hex5HexNAc4. Agalacto structure as well as sialylated and nonsialylated oligosaccharides bearing alpha2-3- and/or alpha2-6-linked NeuNAc are present.

Its subcellular location is the rough endoplasmic reticulum. The protein resides in the nucleus membrane. The protein localises to the golgi apparatus. It is found in the cytoplasm. It localises to the perinuclear region. Its subcellular location is the secreted. It catalyses the reaction prostaglandin H2 = prostaglandin D2. Functionally, catalyzes the conversion of PGH2 to PGD2, a prostaglandin involved in smooth muscle contraction/relaxation and a potent inhibitor of platelet aggregation. Involved in a variety of CNS functions, such as sedation, NREM sleep and PGE2-induced allodynia, and may have an anti-apoptotic role in oligodendrocytes. Binds small non-substrate lipophilic molecules, including biliverdin, bilirubin, retinal, retinoic acid and thyroid hormone, and may act as a scavenger for harmful hydrophobic molecules and as a secretory retinoid and thyroid hormone transporter. Possibly involved in development and maintenance of the blood-brain, blood-retina, blood-aqueous humor and blood-testis barrier. It is likely to play important roles in both maturation and maintenance of the central nervous system and male reproductive system. Involved in PLA2G3-dependent maturation of mast cells. PLA2G3 is secreted by immature mast cells and acts on nearby fibroblasts upstream to PTDGS to synthesize PGD2, which in turn promotes mast cell maturation and degranulation via PTGDR. The chain is Prostaglandin-H2 D-isomerase (PTGDS) from Canis lupus familiaris (Dog).